The sequence spans 373 residues: Chorismate synthase (373 aa).

2 residues coordinate NADP(+): Arg48 and Arg54. FMN-binding positions include 131–133 (RSS), 243–244 (NA), Gly288, 303–307 (KPTSS), and Arg329.

The protein belongs to the chorismate synthase family. As to quaternary structure, homotetramer. Requires FMNH2 as cofactor.

It carries out the reaction 5-O-(1-carboxyvinyl)-3-phosphoshikimate = chorismate + phosphate. It functions in the pathway metabolic intermediate biosynthesis; chorismate biosynthesis; chorismate from D-erythrose 4-phosphate and phosphoenolpyruvate: step 7/7. In terms of biological role, catalyzes the anti-1,4-elimination of the C-3 phosphate and the C-6 proR hydrogen from 5-enolpyruvylshikimate-3-phosphate (EPSP) to yield chorismate, which is the branch point compound that serves as the starting substrate for the three terminal pathways of aromatic amino acid biosynthesis. This reaction introduces a second double bond into the aromatic ring system. The protein is Chorismate synthase of Beijerinckia indica subsp. indica (strain ATCC 9039 / DSM 1715 / NCIMB 8712).